The primary structure comprises 325 residues: MSSVLEMLWVEKYRPRSLDDIVDQKHVVERLKQFVKQRNMPHLLFAGPPGTGKTTAAHALAHDLFGENYRQYMLELNASDERGINVIREKVKEFARSRTPPEIPFKIVLLDEADNMTSDAQQALRRLMELYSSVTRFILIANYPSKIIDPIQSRCAFFRFQPLSKQDVIERLRYIAENEGVDYEEEALDAIYEISEGDMRKAINVLQAASYLGKVTVDAVYRVVGMAKPREVREMLATALKGDFTAARSLLRKIMIEYGMSGEDVARQIHRELFSTELKMPEELRVLAADYLGEVHYRLVEGSDDDIQLSAFLAWLTMMSRKLEV.

47-54 (GPPGTGKT) is an ATP binding site.

This sequence belongs to the activator 1 small subunits family. RfcS subfamily. As to quaternary structure, heteromultimer composed of small subunits (RfcS) and large subunits (RfcL).

Part of the RFC clamp loader complex which loads the PCNA sliding clamp onto DNA. The chain is Replication factor C small subunit from Aeropyrum pernix (strain ATCC 700893 / DSM 11879 / JCM 9820 / NBRC 100138 / K1).